The sequence spans 547 residues: Glucocorticoid-induced transcript 1 protein (547 aa).

Low complexity predominate over residues 1-13 (MSTASSSSSSSSS). Disordered stretches follow at residues 1 to 55 (MSTA…APAA) and 72 to 285 (LLRG…LSNI). Serine 20 carries the phosphoserine modification. Over residues 26-38 (SAAGSPPAVAAAG) the composition is skewed to low complexity. Gly residues predominate over residues 39 to 50 (SGNGAGGGGGVG). Phosphoserine is present on residues serine 79, serine 105, serine 107, and serine 108. The segment covering 86 to 105 (AAAAASLGSLPGPGAARGPS) has biased composition (low complexity). The residue at position 110 (threonine 110) is a Phosphothreonine. Residues 130-145 (RSPESHRRSSSPERRS) are compositionally biased toward basic and acidic residues. Low complexity predominate over residues 162 to 177 (RTSSTIRRTSSLDTIT). Residues serine 171 and serine 172 each carry the phosphoserine modification. Threonine 175 and threonine 177 each carry phosphothreonine. A compositionally biased stretch (basic and acidic residues) spans 187–201 (RDPHVHYPSCMKDKA). Serine 223 is subject to Phosphoserine. Residues 225–254 (GSADQLKEQIAKLRQQLQRSKQSSRHSKEK) are a coiled coil. Over residues 236-245 (KLRQQLQRSK) the composition is skewed to low complexity. Position 258 is a phosphoserine (serine 258). A compositionally biased stretch (polar residues) spans 265 to 276 (ITISHTQATGSR). A Phosphothreonine modification is found at threonine 266. Serine 303 carries the phosphoserine modification. The segment covering 319–331 (EVSKPLDIPDGRR) has biased composition (basic and acidic residues). A disordered region spans residues 319 to 417 (EVSKPLDIPD…KPNNSYMFKR (99 aa)). Positions 339–356 (RSSSTRSIDTQTPSVQER) are enriched in polar residues. Residue threonine 343 is modified to Phosphothreonine. At serine 345 the chain carries Phosphoserine. Threonine 350 carries the phosphothreonine modification. The segment covering 357–369 (SSSCSSHSPCVSP) has biased composition (low complexity). Phosphoserine is present on residues serine 394, serine 398, serine 406, serine 412, and serine 480. Over residues 505 to 520 (SLSDDTSTAGSMEASV) the composition is skewed to polar residues. Residues 505–530 (SLSDDTSTAGSMEASVQQPSQQQQLL) are disordered. Low complexity predominate over residues 521-530 (QQPSQQQQLL).

As to expression, predominantly expressed in lung, spleen, thymus and testis and, at lower levels, in brain, bone marrow, peripheral leukocytes, skin and trachea.

In Homo sapiens (Human), this protein is Glucocorticoid-induced transcript 1 protein (GLCCI1).